The following is a 671-amino-acid chain: Pescadillo homolog (671 aa).

Coiled coils occupy residues 294 to 323 and 548 to 584; these read NQAQAKAVKEAESKRSLMEEELHKVRELFR and QALRKAQEKSRQTETSEARLQRKMSEVKRQEAATRKM. The 87-residue stretch at 317 to 403 folds into the BRCT domain; it reads KVRELFRGLT…LVLPVTGYRI (87 aa). Disordered regions lie at residues 552–577 and 634–671; these read KAQEKSRQTETSEARLQRKMSEVKRQ and GLVNKRLEARRQRAEAKGKKLKERKAGNPYKKLPKWVQ. Residues 634 to 651 show a composition bias toward basic and acidic residues; the sequence is GLVNKRLEARRQRAEAKG.

Belongs to the pescadillo family.

It localises to the nucleus. Its subcellular location is the nucleolus. The protein resides in the nucleoplasm. Its function is as follows. Required for maturation of ribosomal RNAs and formation of the large ribosomal subunit. The sequence is that of Pescadillo homolog from Leishmania major.